The following is a 358-amino-acid chain: Variant-surface-glycoprotein phospholipase C (358 aa).

The 174-residue stretch at 25–198 (IGQVYMVGAH…STRRIFLVVR (174 aa)) folds into the PI-PLC X-box domain.

In terms of assembly, monomer. Post-translationally, the N-terminus is blocked.

It is found in the membrane. The catalysed reaction is a 6-(alpha-D-glucosaminyl)-1-(1,2-diacyl-sn-glycero-3-phospho)-1D-myo-inositol = 6-(alpha-D-glucosaminyl)-1D-myo-inositol 1,2-cyclic phosphate + a 1,2-diacyl-sn-glycerol. Functionally, by hydrolysis of the attached glycolipid, releases soluble variant surface glycoprotein containing phosphoinositol from the cell wall of T.brucei after cell lysis. It also cleaves similar membrane anchors on some mammalian proteins. VSG lipase may play a role in processes such as parasite differentiation or antigenic variation. This is Variant-surface-glycoprotein phospholipase C from Trypanosoma brucei brucei.